Reading from the N-terminus, the 952-residue chain is Anion exchange protein 4 (952 aa).

The disordered stretch occupies residues 1-41 (MKLPGQGDFESSDAHENAHSEEPDSGLGPGPGLNGPSGIDI). The segment covering 12-22 (SDAHENAHSEE) has biased composition (basic and acidic residues). 4 helical membrane passes run 385–405 (AVFYIYLATVTNAITFGGLLG), 413–433 (GVLESFLGTAVAGAAFCLMAG), 470–490 (VGIWVTAFCLALVATEASLLV), and 501–521 (FCALISLIFIYDAMGKMLNLI). N-linked (GlcNAc...) asparagine glycosylation is found at asparagine 546 and asparagine 569. The next 7 helical transmembrane spans lie at 593-613 (VPDIAFFSLLLFFTSFLCAIA), 634-654 (FSSVLAILLGCGLDTFLGLAT), 681-701 (PWWLSVAAALPALLLSILIFM), 727-747 (LFCVAVLMLFTSALGLPWYVS), 784-804 (GLVVFVLTGVSIFLAPVLKFI), 807-827 (PVLYGIFLYMGVAALSSIQFV), and 870-890 (VVKSTPAAIVFPLMLLGLVAI). The interval 915-938 (ETIPENRSEPEHLFSGNDSEDSEL) is disordered. 3 N-linked (GlcNAc...) asparagine glycosylation sites follow: asparagine 920, asparagine 931, and asparagine 948.

It belongs to the anion exchanger (TC 2.A.31) family. Expressed in submandibular gland (SMG) duct and cortical collecting duct (CCD) of kidney. Lower expressed in duodenal villi.

It is found in the basolateral cell membrane. The catalysed reaction is 2 hydrogencarbonate(out) + chloride(in) + Na(+)(out) = 2 hydrogencarbonate(in) + chloride(out) + Na(+)(in). The enzyme catalyses K(+)(in) + 2 hydrogencarbonate(in) + chloride(out) = K(+)(out) + 2 hydrogencarbonate(out) + chloride(in). It catalyses the reaction Li(+)(in) + 2 hydrogencarbonate(in) + chloride(out) = Li(+)(out) + 2 hydrogencarbonate(out) + chloride(in). It carries out the reaction Rb(+)(in) + 2 hydrogencarbonate(in) + chloride(out) = Rb(+)(out) + 2 hydrogencarbonate(out) + chloride(in). The catalysed reaction is Cs(+)(in) + 2 hydrogencarbonate(in) + chloride(out) = Cs(+)(out) + 2 hydrogencarbonate(out) + chloride(in). Cl(-)/HCO3(-) exchanger activity is substantially increased in response to 5 uM isoproterenol. Cl(-)/HCO3(-) exchanger activity is increased by both forskolin and coexpression with the catalytic subunit alpha of PKA. Functionally, electroneutral Cl(-)/HCO3(-) antiporter that favors chloride ion entry and efflux of hydrogencarbonate and sodium ion across the basolateral membrane and may participate in salivary secretion. Also mediates Cl(-)/HCO3(-) exchange activity in the presence of K(+) as well as Cs(+), Li(+), and Rb(+). Does not contribute to Cl(-)/HCO3(-) exchanger in the apical membrane of the upper villous epithelium. This Mus musculus (Mouse) protein is Anion exchange protein 4.